The sequence spans 80 residues: Homeobox protein 7 (80 aa).

The segment at residues 8 to 67 (SNIRNIRSSGISTKKLEDFFSINQYPNKNEIKDFANYYQCDETKIKNWFKGKRDRLKKKS) is a DNA-binding region (homeobox). A disordered region spans residues 60–80 (RDRLKKKSSNNEKSGNKFYFK). Positions 70 to 80 (NEKSGNKFYFK) are enriched in low complexity.

Its subcellular location is the nucleus. In terms of biological role, putative transcription factor. In Dictyostelium discoideum (Social amoeba), this protein is Homeobox protein 7 (hbx7).